The sequence spans 1269 residues: ATP-dependent helicase/nuclease subunit A (1269 aa).

Residues 17 to 492 enclose the UvrD-like helicase ATP-binding domain; that stretch reads GGWTAEQLEA…LALTANFRSR (476 aa). 38–45 contacts ATP; the sequence is ASAGTGKT. The region spanning 541 to 838 is the UvrD-like helicase C-terminal domain; sequence AVELHLVERG…RIMSIHKSKG (298 aa).

Belongs to the helicase family. AddA subfamily. In terms of assembly, heterodimer of AddA and AddB/RexB. Mg(2+) is required as a cofactor.

The catalysed reaction is Couples ATP hydrolysis with the unwinding of duplex DNA by translocating in the 3'-5' direction.. It catalyses the reaction ATP + H2O = ADP + phosphate + H(+). In terms of biological role, the heterodimer acts as both an ATP-dependent DNA helicase and an ATP-dependent, dual-direction single-stranded exonuclease. Recognizes the chi site generating a DNA molecule suitable for the initiation of homologous recombination. The AddA nuclease domain is required for chi fragment generation; this subunit has the helicase and 3' -&gt; 5' nuclease activities. The protein is ATP-dependent helicase/nuclease subunit A of Pelotomaculum thermopropionicum (strain DSM 13744 / JCM 10971 / SI).